A 333-amino-acid polypeptide reads, in one-letter code: Glycerol-3-phosphate dehydrogenase [NAD(P)+] (333 aa).

NADPH contacts are provided by Trp-12, His-31, and Lys-105. Residues Lys-105, Gly-134, and Ser-136 each coordinate sn-glycerol 3-phosphate. Residue Ala-138 participates in NADPH binding. Sn-glycerol 3-phosphate contacts are provided by Lys-189, Asp-242, Ser-252, Arg-253, and Asn-254. Lys-189 (proton acceptor) is an active-site residue. Position 253 (Arg-253) interacts with NADPH. NADPH contacts are provided by Val-278 and Glu-280.

This sequence belongs to the NAD-dependent glycerol-3-phosphate dehydrogenase family.

The protein localises to the cytoplasm. It catalyses the reaction sn-glycerol 3-phosphate + NAD(+) = dihydroxyacetone phosphate + NADH + H(+). The catalysed reaction is sn-glycerol 3-phosphate + NADP(+) = dihydroxyacetone phosphate + NADPH + H(+). Its pathway is membrane lipid metabolism; glycerophospholipid metabolism. Its function is as follows. Catalyzes the reduction of the glycolytic intermediate dihydroxyacetone phosphate (DHAP) to sn-glycerol 3-phosphate (G3P), the key precursor for phospholipid synthesis. This Brachyspira hyodysenteriae (strain ATCC 49526 / WA1) protein is Glycerol-3-phosphate dehydrogenase [NAD(P)+].